The sequence spans 459 residues: MNLRVKQKIPLKIKRMGINGEGIGFYKRTLVFVPGALKGEEIFCQITSVKHNFVQARLLTINKKSKFRVRPACPIYEECGGCQIMHLRYDKQLDFKKDLLKQALKKFKPQGYETYDIRATIGMEHPQHYRAKLQFQTRKFGGSVRAGLFKEQSHHLVDIKDCLIQDELTQKIVNRVCQLLDDYNIPVYDERRHFAGVRTIMVRKSQATNQVQLIFVTSKEVNLVGIIRDLTGYFPEIKTVAVNFNSSKSSAIYGQKTEILWGIDSISEEVLDYSFSLSPRAFYQLNPQQTQVLYHQALQALDVTAEDHLIDAYCGVGSIGLAFANKVKSVRGMDIIPEAITDAKRNAERMGYTNTYYEMGKAENVIPKWYKDGYQASALIVDPPRTGLDEKLLKTLLTYQPEKMVYVSCNVSTLARDLVQLVKVYEVNYIQSVDMFPHTARTEAVVKLVKRKQNSCSKK.

One can recognise a TRAM domain in the interval 2–60; the sequence is NLRVKQKIPLKIKRMGINGEGIGFYKRTLVFVPGALKGEEIFCQITSVKHNFVQARLLT. Cys73, Cys79, Cys82, and Cys162 together coordinate [4Fe-4S] cluster. S-adenosyl-L-methionine-binding residues include Gln284, Tyr313, Asp334, and Asp382. Cys409 serves as the catalytic Nucleophile.

Belongs to the class I-like SAM-binding methyltransferase superfamily. RNA M5U methyltransferase family.

This is an uncharacterized protein from Streptococcus mutans serotype c (strain ATCC 700610 / UA159).